A 184-amino-acid chain; its full sequence is uncharacterized protein (184 aa).

Residues 36 to 164 (LRHRATYIVV…TPDSLKALAL (129 aa)) enclose the Nudix hydrolase domain. The Nudix box motif lies at 73–95 (GGVVQADEQLLESARREAEEELG). Mg(2+) contacts are provided by Glu89 and Glu93.

This sequence belongs to the Nudix hydrolase family. The cofactor is Mg(2+).

This is an uncharacterized protein from Salmonella typhi.